The sequence spans 506 residues: Ribose import ATP-binding protein RbsA 2 (506 aa).

ABC transporter domains are found at residues 5 to 241 (LRLS…VGRR) and 251 to 498 (VRAA…TAGT). 37 to 44 (GENGAGKS) is a binding site for ATP.

It belongs to the ABC transporter superfamily. Ribose importer (TC 3.A.1.2.1) family. As to quaternary structure, the complex is composed of an ATP-binding protein (RbsA), two transmembrane proteins (RbsC) and a solute-binding protein (RbsB).

It is found in the cell inner membrane. The enzyme catalyses D-ribose(out) + ATP + H2O = D-ribose(in) + ADP + phosphate + H(+). In terms of biological role, part of the ABC transporter complex RbsABC involved in ribose import. Responsible for energy coupling to the transport system. The chain is Ribose import ATP-binding protein RbsA 2 from Burkholderia ambifaria (strain ATCC BAA-244 / DSM 16087 / CCUG 44356 / LMG 19182 / AMMD) (Burkholderia cepacia (strain AMMD)).